Reading from the N-terminus, the 77-residue chain is Acyl carrier protein (77 aa).

A Carrier domain is found at 4 to 77 (SETFEKVKKI…TVQAAVDXIN (74 aa)). Serine 40 carries the O-(pantetheine 4'-phosphoryl)serine modification.

The protein belongs to the acyl carrier protein (ACP) family. 4'-phosphopantetheine is transferred from CoA to a specific serine of apo-ACP by AcpS. This modification is essential for activity because fatty acids are bound in thioester linkage to the sulfhydryl of the prosthetic group.

The protein resides in the cytoplasm. The protein operates within lipid metabolism; fatty acid biosynthesis. In terms of biological role, carrier of the growing fatty acid chain in fatty acid biosynthesis. The chain is Acyl carrier protein from Anabaena variabilis.